We begin with the raw amino-acid sequence, 105 residues long: Large ribosomal subunit protein uL24 (105 aa).

This sequence belongs to the universal ribosomal protein uL24 family. Part of the 50S ribosomal subunit.

Functionally, one of two assembly initiator proteins, it binds directly to the 5'-end of the 23S rRNA, where it nucleates assembly of the 50S subunit. In terms of biological role, one of the proteins that surrounds the polypeptide exit tunnel on the outside of the subunit. The chain is Large ribosomal subunit protein uL24 from Aromatoleum aromaticum (strain DSM 19018 / LMG 30748 / EbN1) (Azoarcus sp. (strain EbN1)).